The primary structure comprises 500 residues: Na(+)/H(+) antiporter NhaB (500 aa).

Transmembrane regions (helical) follow at residues 34–54 (PLFF…EFIF), 62–82 (CYPL…GMTT), 90–110 (LVHN…IYFM), 129–149 (ALLG…LDAL), 150–170 (TVTA…HRVA), 205–225 (LLMH…VGEP), 241–261 (FFSK…VTCV), 311–331 (ILIV…LLVI), 350–370 (FKDA…VAVI), 394–414 (MLFI…VATI), 449–469 (VATP…IAPL), and 477–497 (MVWM…YAVS).

The protein belongs to the NhaB Na(+)/H(+) (TC 2.A.34) antiporter family.

It localises to the cell inner membrane. It catalyses the reaction 2 Na(+)(in) + 3 H(+)(out) = 2 Na(+)(out) + 3 H(+)(in). In terms of biological role, na(+)/H(+) antiporter that extrudes sodium in exchange for external protons. This is Na(+)/H(+) antiporter NhaB from Pseudomonas fluorescens (strain ATCC BAA-477 / NRRL B-23932 / Pf-5).